The chain runs to 218 residues: uncharacterized protein (218 aa).

Residues 111-193 (NSIYLVEGDF…ITKVIEIKAA (83 aa)) enclose the Toprim domain.

This is an uncharacterized protein from Mycoplasma genitalium (strain ATCC 33530 / DSM 19775 / NCTC 10195 / G37) (Mycoplasmoides genitalium).